A 182-amino-acid chain; its full sequence is Ribulose bisphosphate carboxylase small subunit, chloroplastic 4 (182 aa).

The N-terminal 41 residues, 1-41, are a transit peptide targeting the chloroplast; that stretch reads MAATMMNKTVVLSKGCTKPSAVPKVSINRKGFLNTAMNKKR.

It belongs to the RuBisCO small chain family. As to quaternary structure, heterohexadecamer of 8 large and 8 small subunits.

It is found in the plastid. The protein resides in the chloroplast. In terms of biological role, ruBisCO catalyzes two reactions: the carboxylation of D-ribulose 1,5-bisphosphate, the primary event in carbon dioxide fixation, as well as the oxidative fragmentation of the pentose substrate. Both reactions occur simultaneously and in competition at the same active site. Although the small subunit is not catalytic it is essential for maximal activity. This chain is Ribulose bisphosphate carboxylase small subunit, chloroplastic 4, found in Acetabularia peniculus (Green alga).